The primary structure comprises 113 residues: UPF0251 protein TK0562 (113 aa).

Belongs to the UPF0251 family.

This chain is UPF0251 protein TK0562, found in Thermococcus kodakarensis (strain ATCC BAA-918 / JCM 12380 / KOD1) (Pyrococcus kodakaraensis (strain KOD1)).